The following is a 325-amino-acid chain: Homoserine O-succinyltransferase (325 aa).

The active-site Acyl-thioester intermediate is Cys-142. Substrate contacts are provided by Lys-163 and Ser-191. His-234 (proton acceptor) is an active-site residue. Glu-236 is a catalytic residue. Substrate is bound at residue Arg-248.

The protein belongs to the MetA family.

It is found in the cytoplasm. It catalyses the reaction L-homoserine + succinyl-CoA = O-succinyl-L-homoserine + CoA. It participates in amino-acid biosynthesis; L-methionine biosynthesis via de novo pathway; O-succinyl-L-homoserine from L-homoserine: step 1/1. Transfers a succinyl group from succinyl-CoA to L-homoserine, forming succinyl-L-homoserine. This is Homoserine O-succinyltransferase from Bradyrhizobium japonicum.